We begin with the raw amino-acid sequence, 253 residues long: Indole-3-glycerol phosphate synthase (253 aa).

The protein belongs to the TrpC family.

It catalyses the reaction 1-(2-carboxyphenylamino)-1-deoxy-D-ribulose 5-phosphate + H(+) = (1S,2R)-1-C-(indol-3-yl)glycerol 3-phosphate + CO2 + H2O. Its pathway is amino-acid biosynthesis; L-tryptophan biosynthesis; L-tryptophan from chorismate: step 4/5. This chain is Indole-3-glycerol phosphate synthase, found in Bacillus thuringiensis (strain Al Hakam).